Reading from the N-terminus, the 73-residue chain is Large ribosomal subunit protein bL31 (73 aa).

Residues Cys16, Cys18, Cys36, and Cys39 each contribute to the Zn(2+) site.

The protein belongs to the bacterial ribosomal protein bL31 family. Type A subfamily. As to quaternary structure, part of the 50S ribosomal subunit. Requires Zn(2+) as cofactor.

Binds the 23S rRNA. The protein is Large ribosomal subunit protein bL31 of Citrifermentans bemidjiense (strain ATCC BAA-1014 / DSM 16622 / JCM 12645 / Bem) (Geobacter bemidjiensis).